We begin with the raw amino-acid sequence, 395 residues long: Probable eukaryotic translation initiation factor 5 (395 aa).

28–35 (GKGNGIKT) contacts GTP. Disordered stretches follow at residues 146 to 171 (PPAKKKSHKHKRDSPVAEEEDGAEDE) and 374 to 395 (LAEASDESESEDEEEEEEDDDE). Over residues 147-157 (PAKKKSHKHKR) the composition is skewed to basic residues. Composition is skewed to acidic residues over residues 161-170 (VAEEEDGAED) and 377-395 (ASDESESEDEEEEEEDDDE). Residues 228–384 (EEAESSRYDQ…AEASDESESE (157 aa)) enclose the W2 domain.

It belongs to the eIF-2-beta/eIF-5 family. As to quaternary structure, monomer.

Functionally, catalyzes the hydrolysis of GTP bound to the 40S ribosomal initiation complex (40S.mRNA.Met-tRNA[F].eIF-2.GTP) with the subsequent joining of a 60S ribosomal subunit resulting in the release of eIF-2 and the guanine nucleotide. The subsequent joining of a 60S ribosomal subunit results in the formation of a functional 80S initiation complex (80S.mRNA.Met-tRNA[F]). This is Probable eukaryotic translation initiation factor 5 (tif5) from Schizosaccharomyces pombe (strain 972 / ATCC 24843) (Fission yeast).